The chain runs to 536 residues: Putative cysteine ligase BshC (536 aa).

Belongs to the BshC family.

Functionally, involved in bacillithiol (BSH) biosynthesis. May catalyze the last step of the pathway, the addition of cysteine to glucosamine malate (GlcN-Mal) to generate BSH. This chain is Putative cysteine ligase BshC, found in Anoxybacillus flavithermus (strain DSM 21510 / WK1).